Reading from the N-terminus, the 312-residue chain is Aspartate carbamoyltransferase catalytic subunit (312 aa).

The carbamoyl phosphate site is built by arginine 58 and threonine 59. Lysine 86 contributes to the L-aspartate binding site. Carbamoyl phosphate is bound by residues arginine 108, histidine 136, and glutamine 139. L-aspartate-binding residues include arginine 169 and arginine 223. Residues glycine 264 and proline 265 each contribute to the carbamoyl phosphate site.

Belongs to the aspartate/ornithine carbamoyltransferase superfamily. ATCase family. In terms of assembly, heterododecamer (2C3:3R2) of six catalytic PyrB chains organized as two trimers (C3), and six regulatory PyrI chains organized as three dimers (R2).

The catalysed reaction is carbamoyl phosphate + L-aspartate = N-carbamoyl-L-aspartate + phosphate + H(+). It participates in pyrimidine metabolism; UMP biosynthesis via de novo pathway; (S)-dihydroorotate from bicarbonate: step 2/3. Functionally, catalyzes the condensation of carbamoyl phosphate and aspartate to form carbamoyl aspartate and inorganic phosphate, the committed step in the de novo pyrimidine nucleotide biosynthesis pathway. The polypeptide is Aspartate carbamoyltransferase catalytic subunit (Desulforapulum autotrophicum (strain ATCC 43914 / DSM 3382 / VKM B-1955 / HRM2) (Desulfobacterium autotrophicum)).